Reading from the N-terminus, the 992-residue chain is Aminopeptidase Q (992 aa).

The Cytoplasmic segment spans residues 2–13; that stretch reads GPPSSSGFYVSR. Residues 14–34 traverse the membrane as a helical; Signal-anchor for type II membrane protein segment; sequence AVALLLAALAAALLLALAVLA. At 35-992 the chain is on the extracellular side; it reads ALYGRCARVQ…RMTAWLRKNT (958 aa). The interval 48 to 92 is disordered; the sequence is LHHGGVPDAASSPRGTQEEQLPTWPPRPTREPAGTATPGHWRPPG. The N-linked (GlcNAc...) asparagine glycan is linked to Asn133. Glu241 contacts substrate. Asn262, Asn289, Asn347, and Asn361 each carry an N-linked (GlcNAc...) asparagine glycan. Residue 380 to 384 coordinates substrate; the sequence is SAMEN. His416 lines the Zn(2+) pocket. The Proton acceptor role is filled by Glu417. Positions 420 and 439 each coordinate Zn(2+). An N-linked (GlcNAc...) asparagine glycan is attached at Asn489. Tyr505 (proton donor) is an active-site residue. 7 N-linked (GlcNAc...) asparagine glycosylation sites follow: Asn584, Asn602, Asn609, Asn655, Asn811, Asn850, and Asn889.

This sequence belongs to the peptidase M1 family. The cofactor is Zn(2+). As to expression, expressed in skin. Expression levels do not differ between dark and light skin areas.

It localises to the membrane. Functionally, metalloprotease which may be important for placentation by regulating biological activity of key peptides at the embryo-maternal interface. Involved in coat pigmentation patterns. During skin development, may be required to establish the periodicity of tabby markings, initiating a pre-pattern at or before hair follicle development. The protein is Aminopeptidase Q (LVRN) of Acinonyx jubatus (Cheetah).